A 458-amino-acid chain; its full sequence is Ammonium transporter Rh type B (458 aa).

The Cytoplasmic portion of the chain corresponds to 1–13; the sequence is MAGSPSRAAGRRL. The chain crosses the membrane as a helical span at residues 14-34; sequence QLPLLCLFLQGATAVLFAVFV. The Extracellular segment spans residues 35-61; that stretch reads RYNHKTDAALWHRSNHSNADNEFYFRY. N-linked (GlcNAc...) asparagine glycosylation occurs at Asn-49. Residues 62–82 traverse the membrane as a helical segment; sequence PSFQDVHAMVFVGFGFLMVFL. Over 83-86 the chain is Cytoplasmic; the sequence is QRYG. Residues 87 to 107 form a helical membrane-spanning segment; sequence FSSVGFTFLLAAFALQWSTLV. Topologically, residues 108–124 are extracellular; it reads QGFLHSFHGGHIHVGVE. Residues 125-145 traverse the membrane as a helical segment; that stretch reads SMINADFCAGAVLISFGAVLG. Residues 146–149 lie on the Cytoplasmic side of the membrane; sequence KTGP. A helical transmembrane segment spans residues 150 to 170; the sequence is TQLLLMALLEVVLFGINEFVL. At 171 to 178 the chain is on the extracellular side; sequence LHLLGVRD. A helical membrane pass occupies residues 179 to 201; that stretch reads AGGSMTIHTFGAYFGLVLSRVLY. Over 202–219 the chain is Cytoplasmic; sequence RPQLEKSKHRQGSVYHSD. Residues 220-240 traverse the membrane as a helical segment; it reads LFAMIGTIFLWIFWPSFNAAL. At 241 to 251 the chain is on the extracellular side; it reads TALGAGQHRTA. Residues 252-272 form a helical membrane-spanning segment; it reads LNTYYSLAASTLGTFALSALV. The Cytoplasmic segment spans residues 273-282; sequence GEDGRLDMVH. A helical membrane pass occupies residues 283-303; the sequence is IQNAALAGGVVVGTSSEMMLT. Residue Pro-304 is a topological domain, extracellular. A helical transmembrane segment spans residues 305–325; it reads FGALAAGFLAGTVSTLGYKFF. Residues 326 to 346 are Cytoplasmic-facing; that stretch reads TPILESKFKVQDTCGVHNLHG. Residues 347–367 traverse the membrane as a helical segment; that stretch reads MPGVLGALLGVLVAGLATHEA. At 368–393 the chain is on the extracellular side; that stretch reads YGDGLESVFPLIAEGQRSATSQAMHQ. Residues 394-414 form a helical membrane-spanning segment; it reads LFGLFVTLMFASVGGGLGGLL. Residues 415–458 lie on the Cytoplasmic side of the membrane; that stretch reads LKLPFLDSPPDSQHYEDQVHWQVPGEHEDKAQRPLRVEEADTQA. Positions 416–424 are interaction with ANK3; it reads KLPFLDSPP. Positions 436 to 458 are disordered; it reads QVPGEHEDKAQRPLRVEEADTQA.

The protein belongs to the ammonium transporter (TC 2.A.49) family. Rh subfamily. In terms of assembly, interacts (via C-terminus) with ANK2 and ANK3; required for targeting to the basolateral membrane. N-glycosylated. As to expression, specifically expressed in kidney. Also detected in liver and ovary.

The protein localises to the cell membrane. Its subcellular location is the basolateral cell membrane. The enzyme catalyses NH4(+)(in) = NH4(+)(out). The catalysed reaction is methylamine(out) = methylamine(in). It carries out the reaction CO2(out) = CO2(in). Ammonium transporter involved in the maintenance of acid-base homeostasis. Transports ammonium and its related derivative methylammonium across the basolateral plasma membrane of epithelial cells likely contributing to renal transepithelial ammonia transport and ammonia metabolism. May transport either NH4(+) or NH3 ammonia species predominantly mediating an electrogenic NH4(+) transport. May act as a CO2 channel providing for renal acid secretion. This Homo sapiens (Human) protein is Ammonium transporter Rh type B.